The chain runs to 243 residues: Zinc import ATP-binding protein ZnuC 2 (243 aa).

An ABC transporter domain is found at Leu-3 to Asp-218. Gly-35–Ser-42 is a binding site for ATP.

It belongs to the ABC transporter superfamily. Zinc importer (TC 3.A.1.15.5) family. In terms of assembly, the complex is composed of two ATP-binding proteins (ZnuC), two transmembrane proteins (ZnuB) and a solute-binding protein (ZnuA).

It localises to the cell inner membrane. It carries out the reaction Zn(2+)(out) + ATP(in) + H2O(in) = Zn(2+)(in) + ADP(in) + phosphate(in) + H(+)(in). Part of the ABC transporter complex ZnuABC involved in zinc import. Responsible for energy coupling to the transport system. This is Zinc import ATP-binding protein ZnuC 2 from Aliivibrio fischeri (strain ATCC 700601 / ES114) (Vibrio fischeri).